Here is a 123-residue protein sequence, read N- to C-terminus: Small ribosomal subunit protein uS12 (123 aa).

D89 is subject to 3-methylthioaspartic acid.

It belongs to the universal ribosomal protein uS12 family. In terms of assembly, part of the 30S ribosomal subunit. Contacts proteins S8 and S17. May interact with IF1 in the 30S initiation complex.

Its function is as follows. With S4 and S5 plays an important role in translational accuracy. In terms of biological role, interacts with and stabilizes bases of the 16S rRNA that are involved in tRNA selection in the A site and with the mRNA backbone. Located at the interface of the 30S and 50S subunits, it traverses the body of the 30S subunit contacting proteins on the other side and probably holding the rRNA structure together. The combined cluster of proteins S8, S12 and S17 appears to hold together the shoulder and platform of the 30S subunit. The protein is Small ribosomal subunit protein uS12 of Orientia tsutsugamushi (strain Ikeda) (Rickettsia tsutsugamushi).